An 891-amino-acid chain; its full sequence is Aconitate hydratase A (891 aa).

Cysteine 435, cysteine 501, and cysteine 504 together coordinate [4Fe-4S] cluster.

Belongs to the aconitase/IPM isomerase family. In terms of assembly, monomer. [4Fe-4S] cluster serves as cofactor.

The catalysed reaction is citrate = D-threo-isocitrate. The enzyme catalyses (2S,3R)-3-hydroxybutane-1,2,3-tricarboxylate = 2-methyl-cis-aconitate + H2O. The protein operates within carbohydrate metabolism; tricarboxylic acid cycle; isocitrate from oxaloacetate: step 2/2. It functions in the pathway organic acid metabolism; propanoate degradation. Functionally, involved in the catabolism of short chain fatty acids (SCFA) via the tricarboxylic acid (TCA)(acetyl degradation route) and probably the 2-methylcitrate cycle I (propionate degradation route). Catalyzes the reversible isomerization of citrate to isocitrate via cis-aconitate. The apo form of AcnA functions as a RNA-binding regulatory protein. Could catalyze the hydration of 2-methyl-cis-aconitate to yield (2R,3S)-2-methylisocitrate. The polypeptide is Aconitate hydratase A (acn) (Legionella pneumophila subsp. pneumophila (strain Philadelphia 1 / ATCC 33152 / DSM 7513)).